A 430-amino-acid polypeptide reads, in one-letter code: Sphingosine-1-phosphate phosphatase 1 (430 aa).

Residues 34–103 (SSPAADEDAE…AGSQRRNSLT (70 aa)) form a disordered region. S101 is modified (phosphoserine). The residue at position 103 (T103) is a Phosphothreonine. 4 helical membrane-spanning segments follow: residues 121 to 141 (FCLG…PFWI), 152 to 172 (LVII…IIRW), 193 to 213 (MPST…LLTY), and 216 to 236 (WQYP…LVCL). Residues 167 to 175 (KDIIRWPRP) form a phosphatase sequence motif I region. The segment at 194–197 (PSTH) is phosphatase sequence motif II. H197 acts as the Proton donor in catalysis. A phosphatase sequence motif III region spans residues 237–248 (SRIYMGMHSILD). H244 (nucleophile) is an active-site residue. The next 5 helical transmembrane spans lie at 246–266 (ILDV…FYPL), 279–299 (YAPL…FTLD), 311–331 (ILGS…LGLS), 348–368 (VTLF…VLFV), and 409–429 (YGMV…FIGI).

The protein belongs to the type 2 lipid phosphate phosphatase family. Highly expressed in liver and kidney. Expressed in epidermis, in the stratum granulosum and the stratum spinosum.

It localises to the endoplasmic reticulum membrane. It is found in the cell membrane. The enzyme catalyses sphinganine 1-phosphate + H2O = sphinganine + phosphate. The catalysed reaction is sphing-4-enine 1-phosphate + H2O = sphing-4-enine + phosphate. Its activity is regulated as follows. Inhibited by NaF, sodium orthovanadate, propanolol, and N-ethylmaleimide. Its function is as follows. Specifically dephosphorylates sphingosine 1-phosphate (S1P), dihydro-S1P, and phyto-S1P. Does not act on ceramide 1-phosphate, lysophosphatidic acid or phosphatidic acid. Sphingosine-1-phosphate phosphatase activity is needed for efficient recycling of sphingosine into the sphingolipid synthesis pathway. Regulates the intracellular levels of the bioactive sphingolipid metabolite S1P that regulates diverse biological processes acting both as an extracellular receptor ligand or as an intracellular second messenger. Involved in efficient ceramide synthesis from exogenous sphingoid bases. Converts S1P to sphingosine, which is readily metabolized to ceramide via ceramide synthase. In concert with sphingosine kinase 2 (SphK2), recycles sphingosine into ceramide through a phosphorylation/dephosphorylation cycle. Regulates endoplasmic-to-Golgi trafficking of ceramides, resulting in the regulation of ceramide levels in the endoplasmic reticulum, preferentially long-chain ceramide species, and influences the anterograde membrane transport of both ceramide and proteins from the endoplasmic reticulum to the Golgi apparatus. The modulation of intracellular ceramide levels in turn regulates apoptosis. Via S1P levels, modulates resting tone, intracellular Ca(2+) and myogenic vasoconstriction in resistance arteries. Also involved in unfolded protein response (UPR) and ER stress-induced autophagy via regulation of intracellular S1P levels. Involved in the regulation of epidermal homeostasis and keratinocyte differentiation. This chain is Sphingosine-1-phosphate phosphatase 1, found in Mus musculus (Mouse).